The following is a 294-amino-acid chain: N-acetylmuramic acid 6-phosphate etherase (294 aa).

Residues 54–217 enclose the SIS domain; sequence VISSFQNGGR…STASMIGIGK (164 aa). Glu-82 (proton donor) is an active-site residue. Residue Glu-113 is part of the active site.

The protein belongs to the GCKR-like family. MurNAc-6-P etherase subfamily. As to quaternary structure, homodimer.

It catalyses the reaction N-acetyl-D-muramate 6-phosphate + H2O = N-acetyl-D-glucosamine 6-phosphate + (R)-lactate. It participates in amino-sugar metabolism; N-acetylmuramate degradation. Its function is as follows. Specifically catalyzes the cleavage of the D-lactyl ether substituent of MurNAc 6-phosphate, producing GlcNAc 6-phosphate and D-lactate. The sequence is that of N-acetylmuramic acid 6-phosphate etherase from Bacillus cytotoxicus (strain DSM 22905 / CIP 110041 / 391-98 / NVH 391-98).